The sequence spans 228 residues: Ribonuclease 3 (228 aa).

The RNase III domain maps to 5–134 (RSKLEKDYGI…FLGALLLDKG (130 aa)). E47 serves as a coordination point for Mg(2+). D51 is an active-site residue. Mg(2+)-binding residues include D120 and E123. Residue E123 is part of the active site. One can recognise a DRBM domain in the interval 160-228 (DYKTSLQELL…AAKNALATLQ (69 aa)).

This sequence belongs to the ribonuclease III family. As to quaternary structure, homodimer. It depends on Mg(2+) as a cofactor.

Its subcellular location is the cytoplasm. It catalyses the reaction Endonucleolytic cleavage to 5'-phosphomonoester.. Functionally, digests double-stranded RNA. Involved in the processing of primary rRNA transcript to yield the immediate precursors to the large and small rRNAs (23S and 16S). Processes some mRNAs, and tRNAs when they are encoded in the rRNA operon. Processes pre-crRNA and tracrRNA of type II CRISPR loci if present in the organism. This chain is Ribonuclease 3, found in Streptococcus agalactiae serotype III (strain NEM316).